The chain runs to 569 residues: Urease subunit alpha (569 aa).

Residues 131–569 (GGFDAHIHFI…LPLAQRYFMY (439 aa)) enclose the Urease domain. Histidine 136, histidine 138, and lysine 219 together coordinate Ni(2+). Lysine 219 is subject to N6-carboxylysine. Histidine 221 provides a ligand contact to substrate. Histidine 248 and histidine 274 together coordinate Ni(2+). Histidine 322 acts as the Proton donor in catalysis. Residue aspartate 362 coordinates Ni(2+).

This sequence belongs to the metallo-dependent hydrolases superfamily. Urease alpha subunit family. Heterotrimer of UreA (gamma), UreB (beta) and UreC (alpha) subunits. Three heterotrimers associate to form the active enzyme. Ni cation is required as a cofactor. Post-translationally, carboxylation allows a single lysine to coordinate two nickel ions.

It is found in the cytoplasm. It catalyses the reaction urea + 2 H2O + H(+) = hydrogencarbonate + 2 NH4(+). Its pathway is nitrogen metabolism; urea degradation; CO(2) and NH(3) from urea (urease route): step 1/1. The protein is Urease subunit alpha of Jannaschia sp. (strain CCS1).